The primary structure comprises 163 residues: uncharacterized protein (163 aa).

The protein belongs to the LcrH/SycD chaperone family.

This is an uncharacterized protein from Escherichia coli (strain K12).